The primary structure comprises 942 residues: Isoleucine--tRNA ligase (942 aa).

Residues 58 to 68 (PYANGDIHIGH) carry the 'HIGH' region motif. E566 provides a ligand contact to L-isoleucyl-5'-AMP. The 'KMSKS' region signature appears at 607 to 611 (KMSKS). K610 is an ATP binding site. Zn(2+) contacts are provided by C905, C908, C925, and C928.

Belongs to the class-I aminoacyl-tRNA synthetase family. IleS type 1 subfamily. In terms of assembly, monomer. It depends on Zn(2+) as a cofactor.

Its subcellular location is the cytoplasm. The catalysed reaction is tRNA(Ile) + L-isoleucine + ATP = L-isoleucyl-tRNA(Ile) + AMP + diphosphate. Functionally, catalyzes the attachment of isoleucine to tRNA(Ile). As IleRS can inadvertently accommodate and process structurally similar amino acids such as valine, to avoid such errors it has two additional distinct tRNA(Ile)-dependent editing activities. One activity is designated as 'pretransfer' editing and involves the hydrolysis of activated Val-AMP. The other activity is designated 'posttransfer' editing and involves deacylation of mischarged Val-tRNA(Ile). In Vibrio parahaemolyticus serotype O3:K6 (strain RIMD 2210633), this protein is Isoleucine--tRNA ligase.